A 72-amino-acid polypeptide reads, in one-letter code: UPF0729 protein C18orf32 homolog (72 aa).

Residues 1-33 (MVCIPCIVIPVLLWIFKKFLEPYIYPVVSRIWP) form a necessary for its localzation to the endoplasmic reticulum and lipid droplets region. The disordered stretch occupies residues 45–72 (TGKVDCKGADTNGFSTKGPTEVSDKKKD).

Belongs to the UPF0729 family. Interacts with DERL1 and AMFR. Post-translationally, undergoes ER-associated degradation (ERAD).

It is found in the endoplasmic reticulum. The protein resides in the lipid droplet. May activate the NF-kappa-B signaling pathway. This is UPF0729 protein C18orf32 homolog from Rattus norvegicus (Rat).